Reading from the N-terminus, the 949-residue chain is MDLVYGLVWLLTVLLEGISGQGVYAPPTVRIVHSGLACNIEEERYSERVYTIREGETLELTCLVTGHPRPQIRWTKTAGSASDRFQDSSVFNETLRITNIQRHQGGRYYCKAENGLGSPAIKSIRVDVYYLDDPVVTVHQSIGEAKEQFYYERTVFLRCVANSNPPVRYSWRRGQEVLLQGSDKGVEIYEPFFTQGETKILKLKNLRPQDYANYSCIASVRNVCNIPDKMVSFRLSNKTASPSIKLLVDDPIVVNPGEAITLVCVTTGGEPTPSLTWVRSFGTLPEKIVLNGGTLTIPAITSDDAGTYSCIANNNVGNPAKKSTNIIVRALKKGRFWITPDPYHKDDNIQIGREVKISCQVEAVPSEELTFSWFKNGRPLRSSERMVITQTDPDVSPGTTNLDIIDLKFTDFGTYTCVASLKGGGISDISIDVNISSSTVPPNLTVPQEKSPLVTREGDTIELQCQVTGKPKPIILWSRADKEVAMPDGTMQMESYDGTLRIVNVSREMSGMYRCQTSQYNGFNVKPREALVQLIVQYPPAVEPAFLEIRQGQDRSVTMSCRVLRAYPIRVLTYEWRLGNKLLRTGQFDSQEYTEYPLKSLSNENYGVYNCSIINEAGAGRCSFLVTGKAYAPEFYYDTYNPVWQNRHRVYSYSLQWTQMNPDAVDRIVAYRLGIRQAGQQRWWEQEIKINGNIQKGELITYNLTELIKPEAYEVRLTPLTKFGEGDSTIRVIKYTGEFHCGFEDGNICLFTQDDTDNFDWTKQSTATRNTKYTPNTGPSADRSGSKEGFYMYIETSRPRLEGEKARLLSPVFSIAPKNPYGPTNSAYCFSFFYHMYGQHIGVLNVYLRLKGQTTIENPLWSSSGNKGQRWNEAHVNIYPITSFQLIFEGIRGPGIEGDIAIDDVSIAEGECAKQDLPTKNSVDGAVGILVHIWLFPVIILISILSPRR.

Positions 1–25 (MDLVYGLVWLLTVLLEGISGQGVYA) are cleaved as a signal peptide. Ig-like domains lie at 27-127 (PTVR…IRVD) and 134-232 (PVVT…KMVS). 2 disulfide bridges follow: cysteine 62–cysteine 110 and cysteine 159–cysteine 216. Residues asparagine 92, asparagine 213, and asparagine 237 are each glycosylated (N-linked (GlcNAc...) asparagine). Ig-like domains follow at residues 242–328 (PSIK…NIIV), 340–436 (PDPY…VNIS), 442–533 (PNLT…ALVQ), and 540–627 (PAVE…FLVT). 2 disulfide bridges follow: cysteine 264/cysteine 310 and cysteine 359/cysteine 417. N-linked (GlcNAc...) asparagine glycans are attached at residues asparagine 434, asparagine 443, asparagine 504, asparagine 610, and asparagine 703. Cystine bridges form between cysteine 465/cysteine 515 and cysteine 561/cysteine 611. A Fibronectin type-III domain is found at 638–738 (DTYNPVWQNR…TIRVIKYTGE (101 aa)). The MAM domain maps to 739-914 (FHCGFEDGNI…VSIAEGECAK (176 aa)). Aspartate 924 carries GPI-anchor amidated aspartate lipidation. Residues 925–949 (GAVGILVHIWLFPVIILISILSPRR) constitute a propeptide, removed in mature form.

In terms of assembly, interacts (through the Ig-like domains) with NLGN2.

Its subcellular location is the cell membrane. Its function is as follows. May be involved in cell-cell interactions. This is MAM domain-containing glycosylphosphatidylinositol anchor protein 2 (Mdga2) from Mus musculus (Mouse).